An 865-amino-acid polypeptide reads, in one-letter code: ABC transporter ATP-binding/permease protein Rv1747 (865 aa).

Positions 29–78 (VVVGRDLRADVRVAHPLISRAHLLLRFDQGRWVAIDNGSLNGLYLNNRRV) constitute an FHA 1 domain. The tract at residues 104 to 205 (GRHRGSAGRP…PAGARGGTEA (102 aa)) is disordered. Residues 135–156 (PQTGTLGSGQLQQLPPATTRIP) show a composition bias toward low complexity. The residue at position 152 (Thr152) is a Phosphothreonine. Pro residues predominate over residues 157 to 166 (AAPPSGPQPR). At Thr210 the chain carries Phosphothreonine. One can recognise an FHA 2 domain in the interval 230 to 279 (VRIGRANDNDIVIPEVLASRHHATLVPTPGGTEIRDNRSINGTFVNGARV). Residues 319-552 (LDVRGVTWTI…VMGTTNWADI (234 aa)) form the ABC transporter domain. An ATP-binding site is contributed by 352-359 (GPSGAGKS). Positions 596–810 (RQFSTIARRQ…TPARWGFAAS (215 aa)) constitute an ABC transmembrane type-2 domain. The next 6 membrane-spanning stretches (helical) occupy residues 614–634 (GYFV…MSVP), 652–672 (PGQI…ALTI), 700–720 (VCVY…IVLV), 740–760 (FVDV…LSAI), 767–787 (IMPL…GMIP), and 836–856 (SAWW…VGFV).

In the central section; belongs to the ABC transporter superfamily. It in the C-terminal section; belongs to the ABC-2 integral membrane protein family. In terms of assembly, homodimer. Interacts with PknF. Post-translationally, phosphorylated by PknF. Can probably be phosphorylated in vivo by other kinases when PknF is missing.

It is found in the cell membrane. Its activity is regulated as follows. Function is positively regulated by phosphorylation. Involved in the translocation of an unknown substrate across the membrane. Transmembrane domains (TMD) form a pore in the membrane and the ATP-binding domain (NBD) is responsible for energy generation. Required for virulence. This chain is ABC transporter ATP-binding/permease protein Rv1747, found in Mycobacterium tuberculosis (strain ATCC 25618 / H37Rv).